We begin with the raw amino-acid sequence, 160 residues long: Lipoprotein signal peptidase (160 aa).

2 consecutive transmembrane segments (helical) span residues 59-79 (PEGILLLALAISAGLTWYVWI) and 84-104 (SPLFILTFALILGGGLGNLID). Catalysis depends on residues Asp113 and Asp139. Residues 132–152 (WPIFNIADACITIGACLLFFF) traverse the membrane as a helical segment.

The protein belongs to the peptidase A8 family.

It localises to the cell inner membrane. The enzyme catalyses Release of signal peptides from bacterial membrane prolipoproteins. Hydrolyzes -Xaa-Yaa-Zaa-|-(S,diacylglyceryl)Cys-, in which Xaa is hydrophobic (preferably Leu), and Yaa (Ala or Ser) and Zaa (Gly or Ala) have small, neutral side chains.. It participates in protein modification; lipoprotein biosynthesis (signal peptide cleavage). This protein specifically catalyzes the removal of signal peptides from prolipoproteins. The chain is Lipoprotein signal peptidase from Chlorobaculum parvum (strain DSM 263 / NCIMB 8327) (Chlorobium vibrioforme subsp. thiosulfatophilum).